The sequence spans 2033 residues: Major viral transcription factor ICP4 homolog (2033 aa).

The span at 1–16 (MFWHQPRQQQLRQLQR) shows a compositional bias: low complexity. Disordered regions lie at residues 1–47 (MFWH…PPSP), 95–145 (FSDP…LPAP), 157–199 (LSSS…GSSY), 218–240 (PPRS…ADRC), 277–301 (DQSP…CVGE), 313–338 (EERK…ESLP), 350–461 (AEIN…GAVA), 505–527 (SFAQ…ARQR), 719–747 (LPPD…ASRT), 1015–1064 (GKQS…GALN), 1085–1186 (LLSD…PGDP), 1294–1342 (ETWR…EGGT), 1420–1451 (ASPH…RDAA), 1531–1612 (VVFP…PPAA), 1636–1655 (RFDE…GGKP), 1664–1718 (LCEQ…SPSP), and 1746–2033 (EISP…GTER). Residues 157–173 (LSSSSPSGSSRGSVTSP) are compositionally biased toward low complexity. Over residues 223–240 (PDCRRGEPVSEDGMADRC) the composition is skewed to basic and acidic residues. Basic and acidic residues predominate over residues 313–326 (EERKEAARRSPDAE). Acidic residues predominate over residues 359–368 (ESDEAEDEDA). Low complexity predominate over residues 507 to 518 (AQRQQPRQQQHA). Gly residues predominate over residues 732–741 (KSRGGRGGGS). Low complexity predominate over residues 1031–1056 (RATASSPRTPASRPPHGSAAAPPSGR). The segment covering 1086 to 1097 (LSDEAGTDDDGD) has biased composition (acidic residues). The segment covering 1169 to 1181 (SSSSFASSSLASA) has biased composition (low complexity). Residues 1294–1303 (ETWRDAEDHP) are compositionally biased toward basic and acidic residues. Basic and acidic residues predominate over residues 1575 to 1591 (SHDRSPSSSSRRRDGRP). The segment covering 1592 to 1602 (SSRRRPSRRMS) has biased composition (basic residues). Composition is skewed to basic and acidic residues over residues 1752–1765 (RRRD…GCRQ) and 1774–1795 (EGGR…DSVP). Positions 1812–1843 (SAGRSSSSSSSSSSSSSSSPSSRPSRSATPSL) are enriched in low complexity. The span at 1853-1869 (APVDRSRSGRRRERDRP) shows a compositional bias: basic and acidic residues. Positions 1912-1921 (TPSSATTLPS) are enriched in polar residues. The segment covering 1927–1936 (DSVDETETED) has biased composition (acidic residues). The span at 1937–1948 (SAPPARLAPSPL) shows a compositional bias: low complexity.

The protein belongs to the herpesviridae ICP4 family. A long stretch of serine residues may be a major site of phosphorylation.

It localises to the host nucleus. This IE protein is a multifunctional protein capable of migrating to the nucleus, binding to DNA, trans-activating other viral genes, and autoregulating its own synthesis. It is required for the switch from immediate-early to early mode of gene expression. The polypeptide is Major viral transcription factor ICP4 homolog (ICP4B) (Amazona oratrix (yellow-headed parrot)).